We begin with the raw amino-acid sequence, 2260 residues long: Reducing polyketide synthase pksF (2260 aa).

The region spanning 20–445 (VEPIAIVGFG…GTNAHVVLDD (426 aa)) is the Ketosynthase family 3 (KS3) domain. Residues Cys-194, His-329, and His-368 each act as for beta-ketoacyl synthase activity in the active site. Residues 598–933 (FVFTGQGAQW…ECAGKLHTIG (336 aa)) form a malonyl-CoA:ACP transacylase (MAT) domain region. The For malonyltransferase activity role is filled by Ser-689. Residues 984–1121 (HELLGSRTPD…GYVAIEYDDR (138 aa)) are N-terminal hotdog fold. Positions 984–1281 (HELLGSRTPD…FRNKLFSITA (298 aa)) are dehydratase (DH) domain. The 323-residue stretch at 984–1306 (HELLGSRTPD…TSTIGRNSPS (323 aa)) folds into the PKS/mFAS DH domain. The active-site Proton acceptor; for dehydratase activity is the His-1016. The segment at 1150-1306 (RIAIDSADIY…TSTIGRNSPS (157 aa)) is C-terminal hotdog fold. The active-site Proton donor; for dehydratase activity is Asp-1216. The segment at 1544 to 1859 (GILKTLHYEQ…DVDVVEKIVI (316 aa)) is enoylreductase (ER) domain. Residues 1882-2104 (PDASYLIAGA…LRFCCDPDRV (223 aa)) are ketoreductase (KR) domain. The Carrier domain maps to 2174 to 2251 (QATDIVVEAI…LLAVKVAGKS (78 aa)). Ser-2211 is modified (O-(pantetheine 4'-phosphoryl)serine).

It depends on pantetheine 4'-phosphate as a cofactor.

Its function is as follows. Reducing polyketide synthase that catalyzes the formation of a C22 intermediate attached to the ACP. Release by intramolecular hydrolysis by the enolized delta-carbonyl would give the pyrone product aslanipyrone. Alternatively, KR-mediated reduction of the beta-carbonyl of the C22 intermediate would form a beta-hydroxy thioester intermediate, which could be a substrate for a further KS-mediated condensation of an additional C2 unit to form a C24 intermediate, which cyclizes by aldol condensation followed by decarboxylation to form aslaniol. Neither aslanipyrone, aslaniol, nor their derivatives have been detected in A.solani, probably due to a low abundance and/or extensive post-PKS modification. It is assumed that the branching point from C22 to C24 is the result of KR activity on the C22 intermediate anchored to the ACP. This Alternaria solani protein is Reducing polyketide synthase pksF.